The primary structure comprises 354 residues: Carbonic anhydrase 12 (354 aa).

Positions 1–24 are cleaved as a signal peptide; the sequence is MPRRSLHAAAVLLLVILKEQPSSP. The Extracellular portion of the chain corresponds to 25–301; the sequence is APVNGSKWTY…VQVCTAAGLS (277 aa). Residues N28 and N80 are each glycosylated (N-linked (GlcNAc...) asparagine). An Alpha-carbonic anhydrase domain is found at 30–289; sequence SKWTYFGPDG…FDERLVYTSF (260 aa). C50 and C230 form a disulfide bridge. Residue H94 is the Proton donor/acceptor of the active site. The Zn(2+) site is built by H119, H121, and H145. N162 is a glycosylation site (N-linked (GlcNAc...) asparagine). 226–227 serves as a coordination point for substrate; sequence TT. A helical membrane pass occupies residues 302-322; it reads LGIILSLALAGILGICIVVVV. Residues 323-354 are Cytoplasmic-facing; it reads SIWLFRRKSIKKGDNKGVIYKPATKMETEAHA.

This sequence belongs to the alpha-carbonic anhydrase family. Homodimer. Zn(2+) is required as a cofactor. As to expression, highly expressed in colon, kidney, prostate, intestine and activated lymphocytes. Expressed at much higher levels in the renal cell cancers than in surrounding normal kidney tissue. Moderately expressed in pancreas, ovary and testis. Expressed in sweat glands and bronchiolar epithelium.

The protein localises to the membrane. The protein resides in the cell membrane. The catalysed reaction is hydrogencarbonate + H(+) = CO2 + H2O. With respect to regulation, inhibited by coumarins, saccharin, sulfonamide derivatives such as acetazolamide (AZA), benzenesulfonamide and derivatives (4-carboxyethylbenzene-sulfonamide, 4-carboxyethylbenzene-sulfonamide ethyl ester, 4-(acetyl-2-aminoethyl)benzene-sulfonamide, 4-aminoethylbenzene-sulfonamide) and Foscarnet (phosphonoformate trisodium salt). In terms of biological role, reversible hydration of carbon dioxide. In Homo sapiens (Human), this protein is Carbonic anhydrase 12.